Consider the following 99-residue polypeptide: Ragulator complex protein LAMTOR4 (99 aa).

Met-1 carries the N-acetylmethionine modification. N-acetylthreonine; in Ragulator complex protein LAMTOR4, N-terminally processed is present on Thr-2. Position 67 is a phosphoserine (Ser-67).

Belongs to the LAMTOR4 family. Part of the Ragulator complex composed of LAMTOR1, LAMTOR2, LAMTOR3, LAMTOR4 and LAMTOR5. LAMTOR4 and LAMTOR5 form a heterodimer that interacts, through LAMTOR1, with a LAMTOR2, LAMTOR3 heterodimer. The Ragulator complex interacts with both the mTORC1 complex and heterodimers constituted of the Rag GTPases RagA/RRAGA, RagB/RRAGB, RagC/RRAGC and RagD/RRAGD; regulated by amino acid availability. The Ragulator complex interacts with SLC38A9; the probable amino acid sensor. Component of the lysosomal folliculin complex (LFC), composed of FLCN, FNIP1 (or FNIP2), RagA/RRAGA or RagB/RRAGB GDP-bound, RagC/RRAGC or RagD/RRAGD GTP-bound, and Ragulator. In terms of processing, phosphorylation at Ser-67 by PKA inhibits Ragulator complex assembly.

The protein localises to the lysosome. Its function is as follows. As part of the Ragulator complex it is involved in amino acid sensing and activation of mTORC1, a signaling complex promoting cell growth in response to growth factors, energy levels, and amino acids. Activated by amino acids through a mechanism involving the lysosomal V-ATPase, the Ragulator plays a dual role for the small GTPases Rag (RagA/RRAGA, RagB/RRAGB, RagC/RRAGC and/or RagD/RRAGD): it (1) acts as a guanine nucleotide exchange factor (GEF), activating the small GTPases Rag and (2) mediates recruitment of Rag GTPases to the lysosome membrane. Activated Ragulator and Rag GTPases function as a scaffold recruiting mTORC1 to lysosomes where it is in turn activated. The protein is Ragulator complex protein LAMTOR4 (LAMTOR4) of Bos taurus (Bovine).